Consider the following 2429-residue polypeptide: TGTPEPIAIVGMGCRFPGGANTPSKLWDLLCAKRDVQRRIPTDRFHVDAFYDRDGERAGCLNVREAYTLDEDIRQFDAAFFKTNALEAEAMDPQQRLLLETVYEALESAGGVMEDLHGSDTAVYVGVMTGDYHELLLRDPEDMPKYMATGTARSILSNRISYFFDWTGPSMTIDTACSSSLVAVHEAVQALRQGRSTLACAAGANLILGPEMMISESKLHMLSPTGRSRMWDAGADGYARGEGFAAVMLKTLSQAVADGDYVYGVIRETGVNSDGRTNGITLPGADSQTALIRQTYARAGLDIDSQRCQYFEAHGTGTAAGDPIEARAIYNAFFASSSEQAETPLYVGSVKTAVGHLEGTAGLAGLVKAVEAVRRGVIPPNMLFESLNPEIQPFYHRLAVPTDTIPWPEVREGEPRRASVNSFGFGGTNAHAIIESYDNPHRRPSSATSSLYTPLVLSANSESSLRGQVEALHAFLSTTDTPVQHILHTLQTRRSQHPVRATFSAPDRDTLSTALSKAVASDSTLGTRVDKRPAKPRILAVFTGQGAQWPTMGREILRASPLAQRTLSTLQSALDTLPDGPDWLLSTEILADKDTSRLASASVAQPLCTAVQILVVDLLRLAGITPSVVVGHSSGEIAAAYAAGMISAAEAIRIAYYRGVHASLARGQNGQRGGMMAVGMSYDEATEFCEENFAERIEVAASNAPSSVTLSGDEDAIAEAKAILDERGVFARPLRVDTAYHSAHMIPCSEPYLDSLAACEIAPQEAREGCVWVSSVHGARMEGYRVDTLTGEYWNDNMVSPVMFSTAVEMALSEEAACDVAIEIGAHPALKGPFTQTAKQVAAAASSATPLPYSGTLSRGQHDIEALSETLGYLWLHLGAKAVAFPAYTSAFTDALPQWVPDLPRYSWDHRQSFWRESTKSANFRSRLPRHPLLGVRSTEDLDQEMRWAITLRTQELPWLEGHKVEGQVIYPAAAYLVMAMEAAHNLVGEGLSVQMLELFDVEIANAIPLPEDGKGVEVQFTLVPSPGNAKSETKTAQWACYARTAGTGKSSWRSNARGTVRVVLGPAADEDLPPRNPPTGVFHEVKTERFYEALTAIGLHYTGPFRGLDSVHRRSGTAMATATQIPAAELGVPIHPAVLDAAFQTLFAAYCWPEDGSLRAPFVPTGLQSLRIVNRDLVQASAQLTVDAAITHSSGTTIIADLDLYSPAAAGLIQLQGLRCSSLTPPGPRDYKELYTQTAWEVDLSSGLAALSSVSDSDSPSNLALVDLSERLAYYYLRHLNTTIPRSAVPQMEWHHQRIFEWIDHLFPLVTSGKHPTIRPEWSTDTKPHLLALASQYPDSVDLQLIRAVGEHLPAVVRGEAWMLEHMVANDTLDRFYKFGLGFARANGYMGRVAGQIAHRYPRSRILEIGAGTGGATKGILEALDGRFERYTFTDISTGFFEAAATQFERWAGKMSYRALDVEKELSSQGWDGEEAGFDVIVASNVLHATKSLRKTMENVRRLLKPGGFLLLLEVTSEIVRVKLMMAGLPGWWLGGEDGRRYGPTITVEQWDTLLKETGFAGVDHVVNDFVDESKYMTSVMVTQAVDADVRLLREPLSAGWTLPPVTVVGGQKGLAGRVVEALGSAGSVQLVENLEGLFVQPDISVTSLVILEDFDHPVLEDFTPCKLEALQRALPECRQLLWVSGQCREKNPYGNMAIGLCRAIAAEQPHIQFQHLDIEDAVDAGAAKAVTEALVRLVFASQTRLATKNVLWTCEPELVRENGQWLVPRIVPDKRLNDQLNARKMVVQGMATSEEKLELVKQAERYVLSPALPSVVEKDGAVEVKVTHALVNAVQLDQGSVCVVSGNLLSKPDVQVIACTNSVRSVVTVSEEMVFPAENASPPLLQTVAFGLVADEWLHGLSSSDVLVLHQADEQLGRVLRSKAAEAGVKVVDVRTHAYASERSIRAQIPPSTKLLVDFAQSSVQWERILPAQCKIRSYGDAIAPGTSIADTANLNTSQLQRAISWAQQQQPADTALETIPAAELATTPTPSYHAILSFSPSTTIPTITRPVNPALLFRPDRTYLLVGCTGGLGQSLCRWMVLNGARHLALTTRNRTRISTTWLADLAQLGANVQLFEADVADMASLTAIHQTITTGMPPIAGIANAAMVLSDRSFGELKHTDFTTVFGPKVLGTKNLDTLFHSQKLDFFIMFSSLASIVGNRGQSNYVAANLFMSTVAAQRRARGLAASVFHIGMVLGVGYVSTTGVYETTLRQYKYMPIAEPEFWDMFAQAIVIGHPTLAGGHAPEMITGLHRHSLREEVAKAFWAENPRFSLHTLVEESQTVVVDAASAKQVPLAEAVAEAETLEEVDGVIQEAFVVKMERMLQAAKGSIERGQPLINLGVDSLIAVEIRSWFLKELEVDMPVLKLVGGMSVGELCREAASEVL.

The 433-residue stretch at 4–436 (PEPIAIVGMG…GTNAHAIIES (433 aa)) folds into the Ketosynthase family 3 (KS3) domain. Catalysis depends on for beta-ketoacyl synthase activity residues cysteine 177, histidine 314, and histidine 356. Residues 541–861 (VFTGQGAQWP…PYSGTLSRGQ (321 aa)) are malonyl-CoA:ACP transacylase (MAT) domain. Residues 931 to 1068 (HPLLGVRSTE…GTVRVVLGPA (138 aa)) form an N-terminal hotdog fold region. Residues 931 to 1229 (HPLLGVRSTE…RCSSLTPPGP (299 aa)) are dehydratase (DH) domain. The PKS/mFAS DH domain occupies 931 to 1230 (HPLLGVRSTE…CSSLTPPGPR (300 aa)). Residue histidine 963 is the Proton acceptor; for dehydratase activity of the active site. Residues 1082-1230 (VFHEVKTERF…CSSLTPPGPR (149 aa)) form a C-terminal hotdog fold region. Catalysis depends on aspartate 1141, which acts as the Proton donor; for dehydratase activity. A methyltransferase (MT) domain region spans residues 1388–1577 (NGYMGRVAGQ…VNDFVDESKY (190 aa)). The ketoreductase (KR) domain stretch occupies residues 2065 to 2235 (TYLLVGCTGG…ARGLAASVFH (171 aa)). The 78-residue stretch at 2351-2428 (EVDGVIQEAF…ELCREAASEV (78 aa)) folds into the Carrier domain. Serine 2388 carries the post-translational modification O-(pantetheine 4'-phosphoryl)serine.

Its pathway is secondary metabolite biosynthesis. Its function is as follows. Highly reducing polyketide synthase; part of the cluster that mediates the biosynthesis of acurin A, a highly reduced polyketide coupled to a serine via a peptide bond. The activities of the highly reducing polyketide synthase acrA and the nonribosomal peptide synthetase acrB are collectively responsible for the synthesis of the acurin A core structure with a heptaketide backbone produced by acrA covalently fused to a L-serine by acrB. After the formation of the PK-NRP hybrid product, it is detached from acrB by reductive release to set up the formation of the lactam ring by aldol condensation. The hydrolyase acrC then catalyzes water loss to generate a double bond in the ring. This double bond is probably reduced, which is followed by three oxidations at C-22 to generate the carboxylic acid moiety, involving probably the FAD-binding monooxygenase acrE and the cytochrome P450 monooxygenases acrD and acrF. Finally, a last methylation step performed by the O-methyltransferase acrG leads to the production of acurin A. The chain is Highly reducing polyketide synthase acrA from Aspergillus aculeatus (strain ATCC 16872 / CBS 172.66 / WB 5094).